The chain runs to 180 residues: Inosine/xanthosine triphosphatase (180 aa).

Residue 8-13 (TTNPAK) coordinates substrate. Mg(2+) contacts are provided by Asp-38 and Glu-68. A substrate-binding site is contributed by 68 to 69 (EA).

It belongs to the YjjX NTPase family. In terms of assembly, homodimer. Mg(2+) is required as a cofactor. Requires Mn(2+) as cofactor.

It catalyses the reaction XTP + H2O = XDP + phosphate + H(+). The catalysed reaction is ITP + H2O = IDP + phosphate + H(+). Functionally, phosphatase that hydrolyzes non-canonical purine nucleotides such as XTP and ITP to their respective diphosphate derivatives. Probably excludes non-canonical purines from DNA/RNA precursor pool, thus preventing their incorporation into DNA/RNA and avoiding chromosomal lesions. The chain is Inosine/xanthosine triphosphatase from Yersinia pestis bv. Antiqua (strain Antiqua).